A 335-amino-acid chain; its full sequence is MSKRKAPQETLNGGITDMLVELANFEKNVSQAIHKYNAYRKAASVIAKYPHKIKSGAEAKKLPGVGTKIAEKIDEFLATGKLRKLEKIRQDDTSSSINFLTRVTGIGPSAARKFVDEGIKTLEDLRKNEDKLNHHQRIGLKYFEDFEKRIPREEMLQMQDIVLNEIKKVDSEYIATVCGSFRRGAESSGDMDVLLTHPNFTSESSKQPKLLHRVVEQLQKVHFITDTLSKGETKFMGVCQLPSEKDGKEYPHRRIDIRLIPKDQYYCGVLYFTGSDIFNKNMRAHALEKGFTINEYTIRPLGVTGVAGEPLPVDSEQDIFDYIQWRYREPKDRSE.

Lysine 41 is covalently cross-linked (Glycyl lysine isopeptide (Lys-Gly) (interchain with G-Cter in ubiquitin)). Residue lysine 60 coordinates K(+). Lysine 60 is a binding site for Na(+). Residue lysine 61 forms a Glycyl lysine isopeptide (Lys-Gly) (interchain with G-Cter in ubiquitin) linkage. Residues leucine 62 and valine 65 each contribute to the K(+) site. Residues leucine 62 and valine 65 each contribute to the Na(+) site. Lysine 72 functions as the Nucleophile; Schiff-base intermediate with DNA; for 5'-dRP lyase activity in the catalytic mechanism. Lysine 72 carries the post-translational modification N6-acetyllysine. Residue lysine 81 forms a Glycyl lysine isopeptide (Lys-Gly) (interchain with G-Cter in ubiquitin) linkage. An Omega-N-methylarginine; by PRMT6 modification is found at arginine 83. K(+)-binding residues include threonine 101, valine 103, and isoleucine 106. Na(+)-binding residues include threonine 101, valine 103, and isoleucine 106. An a 2'-deoxyribonucleoside 5'-triphosphate-binding site is contributed by arginine 149. Arginine 152 is modified (omega-N-methylarginine; by PRMT6). 4 residues coordinate a 2'-deoxyribonucleoside 5'-triphosphate: serine 180, arginine 183, glycine 189, and aspartate 190. Residues 183 to 192 are DNA-binding; sequence RGAESSGDMD. Residues aspartate 190, aspartate 192, and aspartate 256 each coordinate Mg(2+).

This sequence belongs to the DNA polymerase type-X family. Monomer. Binds single-stranded DNA (ssDNA). Interacts with APEX1, LIG1, LIG3, FEN1, PCNA and XRCC1. Interacts with HUWE1/ARF-BP1, STUB1/CHIP and USP47. Interacts with FAM168A. Requires Mg(2+) as cofactor. Methylation by PRMT6 stimulates the polymerase activity by enhancing DNA binding and processivity. Post-translationally, ubiquitinated at Lys-41, Lys-61 and Lys-81: monoubiquitinated by HUWE1/ARF-BP1. Monoubiquitinated protein is then the target of STUB1/CHIP, which catalyzes polyubiquitination from monoubiquitin, leading to degradation by the proteasome. USP47 mediates the deubiquitination of monoubiquitinated protein, preventing polyubiquitination by STUB1/CHIP and its subsequent degradation.

Its subcellular location is the nucleus. It is found in the cytoplasm. It catalyses the reaction DNA(n) + a 2'-deoxyribonucleoside 5'-triphosphate = DNA(n+1) + diphosphate. The enzyme catalyses a 5'-end 2'-deoxyribose-2'-deoxyribonucleotide-DNA = (2E,4S)-4-hydroxypenten-2-al-5-phosphate + a 5'-end 5'-phospho-2'-deoxyribonucleoside-DNA + H(+). The catalysed reaction is 2'-deoxyribonucleotide-(2'-deoxyribose 5'-phosphate)-2'-deoxyribonucleotide-DNA = a 3'-end 2'-deoxyribonucleotide-(2,3-dehydro-2,3-deoxyribose 5'-phosphate)-DNA + a 5'-end 5'-phospho-2'-deoxyribonucleoside-DNA + H(+). Functionally, repair polymerase that plays a key role in base-excision repair. During this process, the damaged base is excised by specific DNA glycosylases, the DNA backbone is nicked at the abasic site by an apurinic/apyrimidic (AP) endonuclease, and POLB removes 5'-deoxyribose-phosphate from the preincised AP site acting as a 5'-deoxyribose-phosphate lyase (5'-dRP lyase); through its DNA polymerase activity, it adds one nucleotide to the 3' end of the arising single-nucleotide gap. Conducts 'gap-filling' DNA synthesis in a stepwise distributive fashion rather than in a processive fashion as for other DNA polymerases. It is also able to cleave sugar-phosphate bonds 3' to an intact AP site, acting as an AP lyase. This chain is DNA polymerase beta (Polb), found in Mus musculus (Mouse).